The following is a 190-amino-acid chain: Dynactin subunit 6 (190 aa).

Residue T186 is modified to Phosphothreonine; by CDK1.

This sequence belongs to the dynactin subunits 5/6 family. Dynactin subunit 6 subfamily. In terms of assembly, subunit of dynactin, a multiprotein complex part of a tripartite complex with dynein and a adapter, such as BICDL1, BICD2 or HOOK3. The dynactin complex is built around ACTR1A/ACTB filament and consists of an actin-related filament composed of a shoulder domain, a pointed end and a barbed end. Its length is defined by its flexible shoulder domain. The soulder is composed of 2 DCTN1 subunits, 4 DCTN2 and 2 DCTN3. The 4 DCNT2 (via N-terminus) bind the ACTR1A filament and act as molecular rulers to determine the length. The pointed end is important for binding dynein-dynactin cargo adapters. Consists of 4 subunits: ACTR10, DCNT4, DCTN5 and DCTN6. Within the complex DCTN6 forms a heterodimer with DCTN5. The barbed end is composed of a CAPZA1:CAPZB heterodimers, which binds ACTR1A/ACTB filament and dynactin and stabilizes dynactin. Interacts with PLK1. Interacts with N4BP2L1. Post-translationally, phosphorylation at Thr-186 by CDK1 during mitotic prometaphase creates a binding site for PLK1 that facilitates its recruitment to kinetochores.

It localises to the cytoplasm. It is found in the cytoskeleton. The protein localises to the chromosome. Its subcellular location is the centromere. The protein resides in the kinetochore. Its function is as follows. Part of the dynactin complex that activates the molecular motor dynein for ultra-processive transport along microtubules. This Pongo abelii (Sumatran orangutan) protein is Dynactin subunit 6 (DCTN6).